Consider the following 179-residue polypeptide: Guanosine-3',5'-bis(diphosphate) 3'-pyrophosphohydrolase MESH1 (179 aa).

Gly2 is subject to N-acetylglycine. An N6-acetyllysine modification is found at Lys25. Residues 32–127 (YINHPIGVAR…VKLADKLYNL (96 aa)) form the HD domain. Residues His35, His61, and Asp62 each coordinate Mn(2+). Catalysis depends on nucleophile residues Glu65 and Asp66. Lys97 bears the N6-acetyllysine mark. Asp122 serves as a coordination point for Mn(2+). Position 123 is an N6-acetyllysine (Lys123).

This sequence belongs to the MESH1 family. Mn(2+) serves as cofactor.

The enzyme catalyses guanosine 3',5'-bis(diphosphate) + H2O = GDP + diphosphate + H(+). Functionally, ppGpp hydrolyzing enzyme involved in starvation response. In Homo sapiens (Human), this protein is Guanosine-3',5'-bis(diphosphate) 3'-pyrophosphohydrolase MESH1 (HDDC3).